The primary structure comprises 838 residues: Urease (838 aa).

A Urease domain is found at 400 to 838 (GAIDCHVHFI…VPLSRNYFLF (439 aa)). Ni(2+) contacts are provided by His405, His407, and Lys488. N6-carboxylysine is present on Lys488. A substrate-binding site is contributed by His490. 2 residues coordinate Ni(2+): His517 and His543. The active-site Proton donor is His591. Asp631 contributes to the Ni(2+) binding site.

The protein in the C-terminal section; belongs to the metallo-dependent hydrolases superfamily. Urease alpha subunit family. Homohexamer. Other oligomeric forms may exist depending on pH and presence of salts. Ni(2+) is required as a cofactor. In terms of processing, carboxylation allows a single lysine to coordinate two nickel ions.

It catalyses the reaction urea + 2 H2O + H(+) = hydrogencarbonate + 2 NH4(+). Its pathway is nitrogen metabolism; urea degradation; CO(2) and NH(3) from urea (urease route): step 1/1. With respect to regulation, requires the three urease accessory proteins URED, UREF AND UREG for its activation. Urea hydrolase involved in nitrogen recycling from ureide, purine, and arginine catabolism. The polypeptide is Urease (Arabidopsis thaliana (Mouse-ear cress)).